The chain runs to 447 residues: Glutamyl-tRNA reductase (447 aa).

Residues 49 to 52 (TCNR), serine 109, 114 to 116 (EQQ), and glutamine 120 each bind substrate. The active-site Nucleophile is the cysteine 50. Residue 189–194 (GAGSMG) coordinates NADP(+).

This sequence belongs to the glutamyl-tRNA reductase family. In terms of assembly, homodimer.

It carries out the reaction (S)-4-amino-5-oxopentanoate + tRNA(Glu) + NADP(+) = L-glutamyl-tRNA(Glu) + NADPH + H(+). The protein operates within porphyrin-containing compound metabolism; protoporphyrin-IX biosynthesis; 5-aminolevulinate from L-glutamyl-tRNA(Glu): step 1/2. Catalyzes the NADPH-dependent reduction of glutamyl-tRNA(Glu) to glutamate 1-semialdehyde (GSA). The chain is Glutamyl-tRNA reductase from Mycobacterium sp. (strain JLS).